Consider the following 1379-residue polypeptide: DNA-directed RNA polymerase subunit beta (1379 aa).

Belongs to the RNA polymerase beta chain family. As to quaternary structure, the RNAP catalytic core consists of 2 alpha, 1 beta, 1 beta' and 1 omega subunit. When a sigma factor is associated with the core the holoenzyme is formed, which can initiate transcription.

It carries out the reaction RNA(n) + a ribonucleoside 5'-triphosphate = RNA(n+1) + diphosphate. Functionally, DNA-dependent RNA polymerase catalyzes the transcription of DNA into RNA using the four ribonucleoside triphosphates as substrates. This is DNA-directed RNA polymerase subunit beta from Rhizobium johnstonii (strain DSM 114642 / LMG 32736 / 3841) (Rhizobium leguminosarum bv. viciae).